The sequence spans 363 residues: Exopolygalacturonase rpg13 (363 aa).

The N-terminal stretch at 1-26 (MVKFLSLTSSVTALLLLSLGANGVAA) is a signal peptide. N-linked (GlcNAc...) asparagine glycosylation is found at N121, N142, and N150. 5 PbH1 repeats span residues 143–173 (ATDVLINNITLHTASTSSLRPKNTDALDVSR), 174–195 (SSNVVFQNSKLTVGDDCLAINE), 197–217 (VTNVTLSKITCNGGHGFSVGS), 227–248 (VKTVRIHDSVCNDCQNGVRIKT), and 256–277 (VSDIKFNNVELNNVENPILITT). Catalysis depends on D188, which acts as the Proton donor. A disulfide bridge connects residues C190 and C207. An N-linked (GlcNAc...) asparagine glycan is attached at N199. H211 is a catalytic residue. N321 carries N-linked (GlcNAc...) asparagine glycosylation. A disulfide bridge links C322 with C328. The PbH1 6 repeat unit spans residues 328 to 354 (CTDFTLSGVKITKASNTPKNVCVNLDG).

The protein belongs to the glycosyl hydrolase 28 family. In terms of processing, N-glycosylated.

The protein resides in the secreted. It carries out the reaction [(1-&gt;4)-alpha-D-galacturonosyl](n) + H2O = alpha-D-galacturonate + [(1-&gt;4)-alpha-D-galacturonosyl](n-1). Functionally, specific in hydrolyzing the terminal glycosidic bond of polygalacturonic acid and oligogalacturonates. Has no activity towards trigalacturonic acid. The protein is Exopolygalacturonase rpg13 of Rhizopus delemar (strain RA 99-880 / ATCC MYA-4621 / FGSC 9543 / NRRL 43880) (Mucormycosis agent).